A 1890-amino-acid polypeptide reads, in one-letter code: Putative aminopeptidase-2 (1890 aa).

Residues 1-20 form the signal peptide; that stretch reads MRRKLLLLLCFIGLFSLIST. An N-linked (GlcNAc...) asparagine glycan is attached at N110. Substrate is bound by residues E220 and 354-358; that span reads GAMEN. H390 contacts Zn(2+). The active-site Proton acceptor is E391. Zn(2+) contacts are provided by H394 and E413. N534, N581, N785, N803, N914, N1024, and N1094 each carry an N-linked (GlcNAc...) asparagine glycan. E1143 contacts substrate. N1245 is a glycosylation site (N-linked (GlcNAc...) asparagine). Substrate is bound at residue 1280-1284; it reads GAMEN. Residue H1316 coordinates Zn(2+). E1317 acts as the Proton acceptor in catalysis. Zn(2+) is bound by residues H1320 and E1339. N-linked (GlcNAc...) asparagine glycans are attached at residues N1451, N1521, N1826, and N1841.

Belongs to the peptidase M1 family. The cofactor is Zn(2+).

Functionally, putative aminopeptidase which plays a role in oocyte maturation. The sequence is that of Putative aminopeptidase-2 from Caenorhabditis elegans.